The sequence spans 373 residues: UBX domain-containing protein 1 (373 aa).

Disordered regions lie at residues 39 to 179 (VTEF…QIPR) and 236 to 293 (IKQH…VDES). The span at 49–59 (TAGSSEPTGQP) shows a compositional bias: polar residues. Composition is skewed to low complexity over residues 60-71 (SAKSSSSTPRES) and 85-94 (LGDLASGAAD). Residues 95 to 104 (SSDDDDDENQ) are compositionally biased toward acidic residues. A compositionally biased stretch (basic and acidic residues) spans 121–132 (DDLKKKIIEKAR). The 74-residue stretch at 185-258 (LHFWADGFSV…KYQPFAGKGQ (74 aa)) folds into the SEP domain. The UBX domain maps to 292-369 (ESQPVVTLQI…PEFKRGGVVV (78 aa)).

In terms of biological role, involved in CDC48-dependent protein degradation through the ubiquitin/proteasome pathway. The polypeptide is UBX domain-containing protein 1 (ubx1) (Emericella nidulans (strain FGSC A4 / ATCC 38163 / CBS 112.46 / NRRL 194 / M139) (Aspergillus nidulans)).